The chain runs to 186 residues: Protein Syd (186 aa).

Belongs to the Syd family.

It is found in the cell inner membrane. Interacts with the SecY protein in vivo. May bind preferentially to an uncomplexed state of SecY, thus functioning either as a chelating agent for excess SecY in the cell or as a regulatory factor that negatively controls the translocase function. The polypeptide is Protein Syd (Erwinia tasmaniensis (strain DSM 17950 / CFBP 7177 / CIP 109463 / NCPPB 4357 / Et1/99)).